The chain runs to 160 residues: SsrA-binding protein (160 aa).

The tract at residues Lys131–Asp160 is disordered.

This sequence belongs to the SmpB family.

The protein localises to the cytoplasm. In terms of biological role, required for rescue of stalled ribosomes mediated by trans-translation. Binds to transfer-messenger RNA (tmRNA), required for stable association of tmRNA with ribosomes. tmRNA and SmpB together mimic tRNA shape, replacing the anticodon stem-loop with SmpB. tmRNA is encoded by the ssrA gene; the 2 termini fold to resemble tRNA(Ala) and it encodes a 'tag peptide', a short internal open reading frame. During trans-translation Ala-aminoacylated tmRNA acts like a tRNA, entering the A-site of stalled ribosomes, displacing the stalled mRNA. The ribosome then switches to translate the ORF on the tmRNA; the nascent peptide is terminated with the 'tag peptide' encoded by the tmRNA and targeted for degradation. The ribosome is freed to recommence translation, which seems to be the essential function of trans-translation. This chain is SsrA-binding protein, found in Azotobacter vinelandii (strain DJ / ATCC BAA-1303).